Reading from the N-terminus, the 231-residue chain is GTP-binding protein RHO3 (231 aa).

Residue 23–30 (GDGACGKT) coordinates GTP. Positions 45–53 (YEPTVFENY) match the Effector region motif. GTP is bound by residues 70 to 74 (DTAGQ) and 128 to 131 (LKCD). Polar residues predominate over residues 139 to 150 (SNAITPNNIQQD). The disordered stretch occupies residues 139-165 (SNAITPNNIQQDNSVSNDNGNNINSTS). The segment covering 151–165 (NSVSNDNGNNINSTS) has biased composition (low complexity). The residue at position 228 (cysteine 228) is a Cysteine methyl ester. Cysteine 228 carries S-farnesyl cysteine lipidation. A propeptide spans 229–231 (TIM) (removed in mature form).

This sequence belongs to the small GTPase superfamily. Rho family. As to quaternary structure, interacts with TOS7.

The protein localises to the cell membrane. Activity is positively regulated by the GTPase activating protein (GAP) RGD1. In terms of biological role, plays an important role in cell growth. Required to keep the uninucleated state. Modulates morphogenesis during bud growth via directing organization of the actin cytoskeleton and the position of the secretory machinery for exocytosis. This chain is GTP-binding protein RHO3, found in Saccharomyces cerevisiae (strain ATCC 204508 / S288c) (Baker's yeast).